A 191-amino-acid polypeptide reads, in one-letter code: TATA-box-binding protein (191 aa).

2 repeat units span residues 18–94 (LQNV…AKIV) and 108–185 (IQNI…YPVL).

This sequence belongs to the TBP family. In terms of assembly, belongs to the TFIID complex together with the TBP-associated factors (TAFs). Binds DNA as monomer.

Its subcellular location is the nucleus. Functionally, general transcription factor that functions at the core of the DNA-binding multiprotein factor TFIID. Binding of TFIID to the TATA box is the initial transcriptional step of the pre-initiation complex (PIC), playing a role in the activation of eukaryotic genes transcribed by RNA polymerase II. The sequence is that of TATA-box-binding protein from Acetabularia peniculus (Green alga).